The following is a 514-amino-acid chain: Membrane-bound lytic murein transglycosylase F (514 aa).

Residues 1-30 (MKKLKINYLFIGILTLLLAAALWPSIPWFG) form the signal peptide. Residues 31–269 (KTENHIAAIQ…RIEEKYLGHG (239 aa)) form a non-LT domain region. An LT domain region spans residues 270 to 514 (DDFDYVDTRS…LFTPQKKEEK (245 aa)). Residue E314 is part of the active site.

It in the N-terminal section; belongs to the bacterial solute-binding protein 3 family. This sequence in the C-terminal section; belongs to the transglycosylase Slt family.

It localises to the cell outer membrane. The enzyme catalyses Exolytic cleavage of the (1-&gt;4)-beta-glycosidic linkage between N-acetylmuramic acid (MurNAc) and N-acetylglucosamine (GlcNAc) residues in peptidoglycan, from either the reducing or the non-reducing ends of the peptidoglycan chains, with concomitant formation of a 1,6-anhydrobond in the MurNAc residue.. Functionally, murein-degrading enzyme that degrades murein glycan strands and insoluble, high-molecular weight murein sacculi, with the concomitant formation of a 1,6-anhydromuramoyl product. Lytic transglycosylases (LTs) play an integral role in the metabolism of the peptidoglycan (PG) sacculus. Their lytic action creates space within the PG sacculus to allow for its expansion as well as for the insertion of various structures such as secretion systems and flagella. The protein is Membrane-bound lytic murein transglycosylase F of Salmonella choleraesuis (strain SC-B67).